A 206-amino-acid chain; its full sequence is Small ribosomal subunit protein uS4 (206 aa).

In terms of domain architecture, S4 RNA-binding spans 96–156 (TRLDNVVYRM…EKSKKQARII (61 aa)).

Belongs to the universal ribosomal protein uS4 family. Part of the 30S ribosomal subunit. Contacts protein S5. The interaction surface between S4 and S5 is involved in control of translational fidelity.

Its function is as follows. One of the primary rRNA binding proteins, it binds directly to 16S rRNA where it nucleates assembly of the body of the 30S subunit. In terms of biological role, with S5 and S12 plays an important role in translational accuracy. The sequence is that of Small ribosomal subunit protein uS4 from Shewanella woodyi (strain ATCC 51908 / MS32).